Reading from the N-terminus, the 355-residue chain is Ubiquinone biosynthesis protein COQ4 homolog, mitochondrial (355 aa).

Residues His-134, Asp-135, His-138, and Glu-150 each coordinate Zn(2+).

This sequence belongs to the COQ4 family. As to quaternary structure, component of a multi-subunit COQ enzyme complex. The cofactor is Zn(2+).

It is found in the mitochondrion inner membrane. The catalysed reaction is a 4-hydroxy-3-methoxy-5-(all-trans-polyprenyl)benzoate + H(+) = a 2-methoxy-6-(all-trans-polyprenyl)phenol + CO2. Its pathway is cofactor biosynthesis; ubiquinone biosynthesis. Its function is as follows. Lyase that catalyzes the C1-decarboxylation of 4-hydroxy-3-methoxy-5-(all-trans-polyprenyl)benzoic acid into 2-methoxy-6-(all-trans-polyprenyl)phenol during ubiquinone biosynthesis. In Plasmodium vivax (strain Salvador I), this protein is Ubiquinone biosynthesis protein COQ4 homolog, mitochondrial.